Here is a 938-residue protein sequence, read N- to C-terminus: Respiratory burst oxidase homolog protein C (938 aa).

Residues methionine 1 to alanine 63 are disordered. Residues methionine 1–arginine 369 are Cytoplasmic-facing. A coiled-coil region spans residues alanine 115–arginine 141. EF-hand-like stretches follow at residues threonine 185–alanine 195 and arginine 222–glutamine 233. 2 EF-hand domains span residues serine 245 to alanine 280 and glutamine 289 to glutamine 324. Ca(2+)-binding residues include aspartate 258, aspartate 260, aspartate 262, arginine 264, and glutamate 269. The helical transmembrane segment at valine 370–glutamine 390 threads the bilayer. Over tyrosine 391–proline 402 the chain is Extracellular. Residues cysteine 403–leucine 423 traverse the membrane as a helical segment. The Ferric oxidoreductase domain maps to lysine 408–isoleucine 565. Residues proline 424–valine 454 are Cytoplasmic-facing. A helical transmembrane segment spans residues isoleucine 455–phenylalanine 475. Topologically, residues proline 476–glycine 509 are extracellular. Residues valine 510–phenylalanine 530 traverse the membrane as a helical segment. Topologically, residues arginine 531–threonine 545 are cytoplasmic. The helical transmembrane segment at glycine 546–valine 566 threads the bilayer. Topologically, residues histidine 567 to arginine 580 are extracellular. Residues serine 581–leucine 599 traverse the membrane as a helical segment. Residues leucine 599–aspartate 727 enclose the FAD-binding FR-type domain. Residues arginine 600–glutamate 732 lie on the Cytoplasmic side of the membrane. A helical membrane pass occupies residues valine 733–isoleucine 753. The Extracellular portion of the chain corresponds to valine 754–phenylalanine 938. The tract at residues glutamate 762 to glycine 796 is disordered. The span at leucine 767–methionine 784 shows a compositional bias: polar residues.

The protein belongs to the RBOH (TC 5.B.1.3) family. As to quaternary structure, monomer and homodimer. In terms of processing, phosphorylated by CPK. Expressed in leaves.

It localises to the membrane. Its function is as follows. Calcium-dependent NADPH oxidase that generates superoxide. May be responsible for the oxidative burst in response to pathogen attack in the leaves. This Solanum tuberosum (Potato) protein is Respiratory burst oxidase homolog protein C (RBOHC).